The chain runs to 276 residues: Putative pyruvate, phosphate dikinase regulatory protein (276 aa).

153 to 160 serves as a coordination point for ADP; the sequence is GISRTSKT.

Belongs to the pyruvate, phosphate/water dikinase regulatory protein family. PDRP subfamily.

The catalysed reaction is N(tele)-phospho-L-histidyl/L-threonyl-[pyruvate, phosphate dikinase] + ADP = N(tele)-phospho-L-histidyl/O-phospho-L-threonyl-[pyruvate, phosphate dikinase] + AMP + H(+). The enzyme catalyses N(tele)-phospho-L-histidyl/O-phospho-L-threonyl-[pyruvate, phosphate dikinase] + phosphate + H(+) = N(tele)-phospho-L-histidyl/L-threonyl-[pyruvate, phosphate dikinase] + diphosphate. Its function is as follows. Bifunctional serine/threonine kinase and phosphorylase involved in the regulation of the pyruvate, phosphate dikinase (PPDK) by catalyzing its phosphorylation/dephosphorylation. The sequence is that of Putative pyruvate, phosphate dikinase regulatory protein from Brucella anthropi (strain ATCC 49188 / DSM 6882 / CCUG 24695 / JCM 21032 / LMG 3331 / NBRC 15819 / NCTC 12168 / Alc 37) (Ochrobactrum anthropi).